The following is a 509-amino-acid chain: Maturase K (509 aa).

It belongs to the intron maturase 2 family. MatK subfamily.

It localises to the plastid. It is found in the chloroplast. In terms of biological role, usually encoded in the trnK tRNA gene intron. Probably assists in splicing its own and other chloroplast group II introns. In Nicotiana glauca (Glaucous tobacco), this protein is Maturase K.